Here is a 37-residue protein sequence, read N- to C-terminus: Large ribosomal subunit protein bL36 (37 aa).

It belongs to the bacterial ribosomal protein bL36 family.

The chain is Large ribosomal subunit protein bL36 from Prochlorococcus marinus (strain MIT 9303).